Here is a 4903-residue protein sequence, read N- to C-terminus: Histone-lysine N-methyltransferase 2C (4903 aa).

Disordered regions lie at residues 1-116 and 159-202; these read MSSE…SEES and LTLP…PPQQ. The span at 13–28 shows a compositional bias: pro residues; that stretch reads QPPPAPPEEPGAPAPS. 2 positions are modified to phosphoserine: serine 28 and serine 46. The segment at residues 34–46 is a DNA-binding region (a.T hook); it reads KRPRGRPRKDGAS. Residues 50 to 59 show a composition bias toward basic residues; the sequence is RARKKPRSRG. A compositionally biased stretch (acidic residues) spans 64 to 81; that stretch reads EDEDSMDGLETTETENIV. Serine 89 and serine 113 each carry phosphoserine. A compositionally biased stretch (polar residues) spans 101–116; that stretch reads SKQPVSALQRSVSEES. The C2HC pre-PHD-type 1; degenerate zinc-finger motif lies at 226–261; that stretch reads ELSLVGLPDAIDVQALFDSTGTCWAHHRCVEWSLGI. 4 consecutive PHD-type zinc fingers follow at residues 282-330, 340-390, 387-437, and 463-519; these read ERCA…PEHI, DANC…CKVC, CKVC…CRIC, and DNLC…CKHL. Residues 343–388 form an RING-type zinc finger; the sequence is CAVCDSPGDLLDQFFCTTCGQHYHGMCLDIAVTPLKRAGWQCPECK. The DHHC domain maps to 435–488; that stretch reads RICIECGTRSSTQWHHNCLICDTCYQQQDNLCPFCGKCYHPELQKDMLHCNMCK. The tract at residues 671-703 is disordered; sequence SEVASKELSPPKSAPETAAPEALLSPHSERSLS. The residue at position 751 (lysine 751) is an N6-acetyllysine. A compositionally biased stretch (basic residues) spans 824-835; it reads TKRKFSPGRPRS. Disordered stretches follow at residues 824-857 and 882-904; these read TKRK…DTSE and GFPG…GRSK. The span at 838 to 848 shows a compositional bias: polar residues; it reads GAWSNHNTVSP. The residue at position 847 (serine 847) is a Phosphoserine. 3 PHD-type zinc fingers span residues 950–1003, 1000–1050, and 1077–1132; these read QDMC…CTVC, CTVC…CVWC, and LSSC…CRPY. Residues 1208–1318 are disordered; that stretch reads AVLQTPPDIQ…PSRDDGWREQ (111 aa). Over residues 1217–1263 the composition is skewed to basic and acidic residues; that stretch reads QSEHSRDGEMDDSREGELMDCDGKSESSPEREAGDDETKGIEGTDAI. Serine 1294 carries the post-translational modification Phosphoserine. The span at 1309–1318 shows a compositional bias: basic and acidic residues; it reads PSRDDGWREQ. The stretch at 1330 to 1352 forms a coiled coil; the sequence is VAENTDKIKKRYRKRKNKLEETF. Disordered regions lie at residues 1397–1419 and 1447–1473; these read SDPL…ADDP and HSDI…RPLT. 2 stretches are compositionally biased toward polar residues: residues 1406–1415 and 1455–1471; these read TSAKPGTQGT and ADAS…SSRP. Lysine 1497 is subject to N6-acetyllysine. Disordered regions lie at residues 1594–1617 and 1698–1757; these read NAIA…ENDT and VQMS…AKIE. The span at 1599 to 1617 shows a compositional bias: polar residues; sequence DPNSSWAPTTPSMEGENDT. Residues 1707–1717 show a composition bias toward low complexity; that stretch reads RQQQQDSIDPS. The segment covering 1718-1742 has biased composition (basic and acidic residues); it reads SRIDSDLFKDPLKQRESEHEQEWKF. Residues 1743–1790 adopt a coiled-coil conformation; the sequence is RQQMRQKSKQQAKIEATQKLEQVKNEQQQQQQQQQQQQQQQLASQHLL. Lysine 1761 carries the N6-acetyllysine modification. The disordered stretch occupies residues 1791–2375; the sequence is VAPGSDTPSS…MSQADTEKLR (585 aa). Over residues 1796–1819 the composition is skewed to polar residues; it reads DTPSSGAQSPLTPQAGNGNVSPAQ. The span at 1855–1886 shows a compositional bias: low complexity; it reads PSRIPVQESLSQSQNSQPPSPQMFSPGSSHSR. Serine 1983 is modified (phosphoserine). The segment covering 1986-2001 has biased composition (polar residues); the sequence is ISEQSTKGPLTTGTSD. Lysine 2005 is modified (N6-acetyllysine). Composition is skewed to polar residues over residues 2113 to 2124, 2137 to 2151, and 2325 to 2334; these read GTISRSASQDPY, SYSQ…NPDP, and GNFSTSSNLP. The span at 2335 to 2347 shows a compositional bias: low complexity; the sequence is VSSQGQQFSSVSQ. Positions 2355-2369 are enriched in polar residues; it reads SGGTDTQNTVNMSQA. Residues arginine 2447 and arginine 2563 each carry the asymmetric dimethylarginine modification. Disordered regions lie at residues 2561–2668, 2702–2736, and 2786–2844; these read RSRL…DNLE, KDLD…NDPN, and VEPK…GDAD. Polar residues-rich tracts occupy residues 2602–2611, 2621–2636, and 2653–2668; these read QPSQCLSNQL, PPSQ…QSSI, and PLST…DNLE. Over residues 2788–2807 the composition is skewed to basic and acidic residues; that stretch reads PKTRDQGDKTMVLEDKDLPQ. N6-acetyllysine occurs at positions 2796 and 2803. Serine 2822 is modified (phosphoserine). Tyrosine 2824 carries the post-translational modification Phosphotyrosine. Basic and acidic residues predominate over residues 2825-2843; the sequence is SKEEIQSEIKNHDDSRGDA. Residues lysine 2826 and lysine 2862 each carry the N6-acetyllysine modification. The disordered stretch occupies residues 2920–2953; sequence EKCDDSDIRPSGSSPPSLPISPSTHGSSLPPTLI. The segment covering 2929–2942 has biased composition (low complexity); it reads PSGSSPPSLPISPS. Coiled coils occupy residues 3047-3074 and 3166-3193; these read LLQD…QRSE and NDSQ…YLEE. A compositionally biased stretch (basic residues) spans 3198 to 3214; sequence HRKSKKALSAKQRTAKK. Residues 3198 to 3223 are disordered; the sequence is HRKSKKALSAKQRTAKKAGREFPEED. Coiled-coil stretches lie at residues 3224 to 3270 and 3387 to 3432; these read AEQL…QQCA and FSES…QHCL. Disordered regions lie at residues 3329–3407 and 3444–3910; these read PGWQ…QERQ and SQMP…QKMA. Residues 3391-3407 are compositionally biased toward basic and acidic residues; sequence FQERERKERLREQQERQ. The segment covering 3464–3485 has biased composition (low complexity); it reads LQQSPQHQQQIGPVLQQQNVQQ. Polar residues-rich tracts occupy residues 3486–3503, 3515–3524, 3557–3586, and 3632–3647; these read GSVN…NEQR, PSASGGSPNF, PVAN…SLIQ, and LSET…PSEL. Basic and acidic residues-rich tracts occupy residues 3697–3739 and 3795–3804; these read AEAD…KIKD and SSTKDGKLIE. Lysine 3709 carries the N6-acetyllysine modification. The segment covering 3871–3885 has biased composition (polar residues); that stretch reads MYSSSDSFTHLKQQN. Over residues 3890 to 3904 the composition is skewed to pro residues; it reads PPTPPASLPPTPPPM. A Phosphoserine modification is found at serine 4027. Arginine 4132 carries the asymmetric dimethylarginine modification. Positions 4159–4184 are disordered; that stretch reads PNVPFPPTSNGLSGYKDSSHGPAEGA. Phosphoserine is present on serine 4260. The C2HC pre-PHD-type 2 zinc finger occupies 4391–4431; the sequence is CRKCCFCHEEGDGLTDGPARLLNLDLDLWVHLNCALWSTEV. Residues 4452–4499 form a PHD-type 8 zinc finger; the sequence is MKCVFCHKTGATSGCHRFRCTNIYHFTCATKAQCMFFKDKTMLCPMHK. The FYR N-terminal domain maps to 4537-4597; it reads DHTFRVGSLI…CRYLCSIEEK (61 aa). The FYR C-terminal domain occupies 4598 to 4683; it reads DGRPVFVIRI…EACENYTFRY (86 aa). A WDR5 interaction motif (WIN) motif is present at residues 4699-4704; it reads GCARSE. The 117-residue stretch at 4763–4879 folds into the SET domain; sequence SNVYLARSRI…KGEELCYDYK (117 aa). S-adenosyl-L-methionine contacts are provided by residues tyrosine 4817 and 4840–4841; that span reads NH. Zn(2+) contacts are provided by cysteine 4843, cysteine 4891, cysteine 4893, and cysteine 4898. Residues 4887-4903 enclose the Post-SET domain; that stretch reads HKIPCHCGAVNCRKWMN.

It belongs to the class V-like SAM-binding methyltransferase superfamily. Histone-lysine methyltransferase family. TRX/MLL subfamily. Component of the MLL3 complex (also named ASCOM complex), at least composed of catalytic subunit KMT2C/MLL3, ASH2L, RBBP5, WDR5, NCOA6, DPY30, KDM6A, PAXIP1/PTIP, PAGR1 and alpha- and beta-tubulin. Forms a core complex with the evolutionary conserved subcomplex WRAD composed of WDR5, RBBP5, ASH2L/ASH2 and DPY30 subunits; WRAD differentially stimulates the methyltransferase activity. Interacts (via WIN motif) with WDR5. In adult, detected in testis, kidney, spleen and lung, weakly expressed in brain and absent in heart and liver. First detected throughout the embryo at 8 dpc when expression is strong in forebrain neuroepithelium and absent in heart. Expressed in the eye lens between 10 and 14.5 dpc. By 13 dpc, expressed strongly in spinal cord, hand/foot plates and gonads.

It is found in the nucleus. The catalysed reaction is L-lysyl(4)-[histone H3] + S-adenosyl-L-methionine = N(6)-methyl-L-lysyl(4)-[histone H3] + S-adenosyl-L-homocysteine + H(+). Its function is as follows. Histone methyltransferase that catalyzes methyl group transfer from S-adenosyl-L-methionine to the epsilon-amino group of 'Lys-4' of histone H3 (H3K4). Part of chromatin remodeling machinery predominantly forms H3K4me1 methylation marks at active chromatin sites where transcription and DNA repair take place. Likely plays a redundant role with KMT2D in enriching H3K4me1 mark on primed and active enhancer elements. This is Histone-lysine N-methyltransferase 2C (Kmt2c) from Mus musculus (Mouse).